The sequence spans 628 residues: ATP-binding cassette sub-family F member 2 (628 aa).

The tract at residues 1-57 (MPSDLAKKKAAKKKEAAKARQRPRKGHEENGDAVTEPQVAEEKIEEANGRETTGDGE) is disordered. Positions 40–53 (AEEKIEEANGRETT) are enriched in basic and acidic residues. ABC transporter domains are found at residues 91–330 (VHII…ENQM) and 401–618 (IMVQ…VDEE). 123–130 (GLNGIGKS) serves as a coordination point for ATP. Threonine 223 is subject to Phosphothreonine. Lysine 309 is subject to N6-acetyllysine. 435–442 (GPNGAGKS) provides a ligand contact to ATP. Phosphoserine is present on serine 517.

It belongs to the ABC transporter superfamily. ABCF family. EF3 subfamily.

In Mus musculus (Mouse), this protein is ATP-binding cassette sub-family F member 2.